Reading from the N-terminus, the 833-residue chain is Leucine--tRNA ligase (833 aa).

The 'HIGH' region motif lies at 41–52 (PYPSGAGLHVGH). The short motif at 610-614 (KMSKS) is the 'KMSKS' region element. K613 is an ATP binding site.

Belongs to the class-I aminoacyl-tRNA synthetase family.

It localises to the cytoplasm. The catalysed reaction is tRNA(Leu) + L-leucine + ATP = L-leucyl-tRNA(Leu) + AMP + diphosphate. In Streptococcus pneumoniae (strain Hungary19A-6), this protein is Leucine--tRNA ligase.